Consider the following 137-residue polypeptide: Large-conductance mechanosensitive channel (137 aa).

2 helical membrane passes run 14–34 (VLDLAVGVIIGAAFTAIINSL) and 81–101 (GSFLNAVINFLLVAFVIFLIV).

Belongs to the MscL family. In terms of assembly, homopentamer.

Its subcellular location is the cell membrane. In terms of biological role, channel that opens in response to stretch forces in the membrane lipid bilayer. May participate in the regulation of osmotic pressure changes within the cell. The sequence is that of Large-conductance mechanosensitive channel from Chloroflexus aggregans (strain MD-66 / DSM 9485).